We begin with the raw amino-acid sequence, 406 residues long: Argininosuccinate synthase (406 aa).

Residues 13–21 and A40 each bind ATP; that span reads AYSGGLDTS. Residues Y91 and S96 each contribute to the L-citrulline site. G121 is a binding site for ATP. T123, N127, and D128 together coordinate L-aspartate. N127 provides a ligand contact to L-citrulline. The L-citrulline site is built by R131, S180, S189, E265, and Y277.

It belongs to the argininosuccinate synthase family. Type 1 subfamily. In terms of assembly, homotetramer.

The protein resides in the cytoplasm. The enzyme catalyses L-citrulline + L-aspartate + ATP = 2-(N(omega)-L-arginino)succinate + AMP + diphosphate + H(+). It functions in the pathway amino-acid biosynthesis; L-arginine biosynthesis; L-arginine from L-ornithine and carbamoyl phosphate: step 2/3. The chain is Argininosuccinate synthase from Syntrophotalea carbinolica (strain DSM 2380 / NBRC 103641 / GraBd1) (Pelobacter carbinolicus).